A 334-amino-acid chain; its full sequence is MITSSLPLTDLHRHLDGNIRTQTILELGQKFGVKLPANTLQTLTPYVQIVEAEPSLVAFLSKLDWGVAVLGDLDACRRVAYENVEDALNARIDYAELRFSPYYMAMKHSLPVTGVVEAVVDGVRAGVRDFGIQANLIGIMSRTFGTDACQQELDAILSQKNHIVAVDLAGDELGQPGDRFIQHFKQVRDAGLHVTVHAGEAAGPESMWQAIRDLGATRIGHGVKAIHDPKLMDYLAQHRIGIESCLTSNLQTSTVDSLATHPLKRFLEHGILACINTDDPAVEGIELPYEYEVAAPQAGLSQEQIRQAQLNGLELAFLSDSEKKALLAKAALRG.

Zn(2+)-binding residues include His-12 and His-14. Residues His-14, Asp-16, and Gly-170 each contribute to the substrate site. His-197 is a binding site for Zn(2+). The Proton donor role is filled by Glu-200. Asp-278 contributes to the Zn(2+) binding site. Asp-279 lines the substrate pocket.

The protein belongs to the metallo-dependent hydrolases superfamily. Adenosine and AMP deaminases family. Adenosine deaminase subfamily. It depends on Zn(2+) as a cofactor.

The catalysed reaction is adenosine + H2O + H(+) = inosine + NH4(+). It carries out the reaction 2'-deoxyadenosine + H2O + H(+) = 2'-deoxyinosine + NH4(+). In terms of biological role, catalyzes the hydrolytic deamination of adenosine and 2-deoxyadenosine. The chain is Adenosine deaminase from Vibrio cholerae serotype O1 (strain ATCC 39541 / Classical Ogawa 395 / O395).